A 295-amino-acid polypeptide reads, in one-letter code: MAECCVPVCPRPMCIPPPYADLGKAARDIFNKGFGFGLVKLDVKTKSCSGVEFSTSGSSNTDTGKVSGTLETKYKWCEYGLTFTEKWNTDNTLGTEIAIEDQICQGLKLTFDTTFSPNTGKKSGKIKSAYKRECINLGCDVDFDFAGPAIHGSAVFGYEGWLAGYQMTFDSAKSKLTRSNFAVGYRTGDFQLHTNVNNGTEFGGSIYQKVCEDFDTSVNLAWTSGTNCTRFGIAAKYQLDPTASISAKVNNSSLIGVGYTQTLRPGVKLTLSALVDGKSFNAGGHKLGLALELEA.

Lys-24 and Lys-32 together coordinate ATP. Lys-32 carries the post-translational modification N6-acetyllysine; alternate. Residue Lys-32 is modified to N6-succinyllysine; alternate. Lys-32 participates in a covalent cross-link: Glycyl lysine isopeptide (Lys-Gly) (interchain with G-Cter in ubiquitin); alternate. 2 consecutive transmembrane segments (beta stranded) span residues 38 to 45 (LVKLDVKT) and 51 to 60 (VEFSTSGSSN). A Glycyl lysine isopeptide (Lys-Gly) (interchain with G-Cter in ubiquitin) cross-link involves residue Lys-65. A beta stranded membrane pass occupies residues 66–76 (VSGTLETKYKW). Residue Tyr-79 is modified to Phosphotyrosine. 3 beta stranded membrane passes run 81 to 88 (LTFTEKWN), 92 to 100 (TLGTEIAIE), and 107 to 116 (LKLTFDTTFS). A Phosphothreonine modification is found at Thr-119. Lys-121 is modified (N6-acetyllysine; alternate). Lys-121 is covalently cross-linked (Glycyl lysine isopeptide (Lys-Gly) (interchain with G-Cter in ubiquitin); alternate). Lys-122 participates in a covalent cross-link: Glycyl lysine isopeptide (Lys-Gly) (interchain with G-Cter in ubiquitin). The next 4 membrane-spanning stretches (beta stranded) occupy residues 122-131 (KSGKIKSAYK), 135-144 (INLGCDVDFD), 148-157 (PAIHGSAVFG), and 161-170 (WLAGYQMTFD). Residue Lys-173 forms a Glycyl lysine isopeptide (Lys-Gly) (interchain with G-Cter in ubiquitin) linkage. 6 beta stranded membrane passes run 177–187 (TRSNFAVGYRT), 190–197 (FQLHTNVN), 201–210 (EFGGSIYQKV), 214–222 (FDTSVNLAW), 229–238 (TRFGIAAKYQ), and 243–250 (ASISAKVN). Ser-252 bears the Phosphoserine mark. NAD(+)-binding positions include 254-256 (LIG) and 272-276 (SALVD). Beta stranded transmembrane passes span 254–263 (LIGVGYTQTL) and 267–275 (VKLTLSALV). Lys-278 bears the N6-acetyllysine; alternate mark. Lys-278 is covalently cross-linked (Glycyl lysine isopeptide (Lys-Gly) (interchain with G-Cter in ubiquitin); alternate). Residues 285–295 (HKLGLALELEA) form a beta stranded membrane-spanning segment.

It belongs to the eukaryotic mitochondrial porin family. In terms of assembly, monomer, homodimer and higher order oligomers; formation of higher order structures is necessary for scramblase activity. Interacts with ARMC12 in a TBC1D21-dependent manner. Interacts with KLC3. Interacts with SPATA33. Interacts with PPP3CC in a SPATA33-dependent manner. Post-translationally, ubiquitinated by PRKN during mitophagy, leading to its degradation and enhancement of mitophagy. Deubiquitinated by USP30. In terms of tissue distribution, highest levels of expression detected in testis, less but still abundant expression in heart, kidney, brain, and skeletal muscle. Expressed in the sperm midpiece (at protein level).

It is found in the mitochondrion outer membrane. The protein localises to the membrane. It carries out the reaction chloride(in) = chloride(out). The catalysed reaction is K(+)(in) = K(+)(out). The enzyme catalyses a 1,2-diacyl-sn-glycero-3-phospho-L-serine(in) = a 1,2-diacyl-sn-glycero-3-phospho-L-serine(out). It catalyses the reaction a 1,2-diacyl-sn-glycero-3-phosphocholine(in) = a 1,2-diacyl-sn-glycero-3-phosphocholine(out). It carries out the reaction a 1,2-diacyl-sn-glycero-3-phospho-(1D-myo-inositol)(in) = a 1,2-diacyl-sn-glycero-3-phospho-(1D-myo-inositol)(out). Non-selective voltage-gated ion channel that mediates the transport of anions and cations through the mitochondrion outer membrane and plasma membrane. The channel adopts an open conformation at zero mV and a closed conformation at both positive and negative potentials. There are two populations of channels; the main that functions in a lower open-state conductance with lower ion selectivity, that switch, in a voltage-dependent manner, from the open to a low-conducting 'closed' state and the other that has a normal ion selectivity in the typical high conductance, 'open' state. Binds various lipids, including the sphingolipid ceramide, the phospholipid phosphatidylcholine, and the sterols cholesterol and oxysterol. Binding of ceramide promotes the mitochondrial outer membrane permeabilization (MOMP) apoptotic pathway. In terms of biological role, catalyzes the scrambling of phospholipids across the outer mitochondrial membrane; the mechanism is unrelated to channel activity and is capable of translocating both anionic and zwitterionic phospholipids. This Mus musculus (Mouse) protein is Non-selective voltage-gated ion channel VDAC2.